Consider the following 906-residue polypeptide: Eukaryotic translation initiation factor 3 subunit C (906 aa).

Residues 1-22 (MSRFFANGSDSESESSEEEVQA) are disordered. The segment covering 11–20 (SESESSEEEV) has biased composition (acidic residues). Phosphoserine occurs at positions 34, 165, 176, and 185. Residues 158-283 (REAPDQESEA…KRPEDDEDGE (126 aa)) are disordered. Positions 162-186 (DQESEAEDEEAAQDSDGGDAGDDSD) are enriched in acidic residues. The segment covering 195–209 (EAAPKVAKTVPAKAA) has biased composition (low complexity). Positions 211–237 (ADDDDSDDSIDWDSDSETETESSDDEN) are enriched in acidic residues. Positions 242–270 (MRERFLKRTTEKEEKDDDKRKDKRKEQKI) are enriched in basic and acidic residues. The PCI domain occupies 641-817 (FHMHINLELL…ETVVMHRSEP (177 aa)). 2 disordered regions span residues 853–873 (GNMG…NWGG) and 887–906 (QRGR…IDEE). The segment covering 894 to 906 (QQQQQQVQTIDEE) has biased composition (low complexity).

The protein belongs to the eIF-3 subunit C family. Component of the eukaryotic translation initiation factor 3 (eIF-3) complex. The eIF-3 complex interacts with pix.

The protein localises to the cytoplasm. In terms of biological role, component of the eukaryotic translation initiation factor 3 (eIF-3) complex, which is involved in protein synthesis of a specialized repertoire of mRNAs and, together with other initiation factors, stimulates binding of mRNA and methionyl-tRNAi to the 40S ribosome. The eIF-3 complex specifically targets and initiates translation of a subset of mRNAs involved in cell proliferation. The chain is Eukaryotic translation initiation factor 3 subunit C from Drosophila ananassae (Fruit fly).